The primary structure comprises 460 residues: Bifunctional protein GlmU (460 aa).

The pyrophosphorylase stretch occupies residues 1–233 (MLDIVIMAAG…ETEVLGVNSP (233 aa)). UDP-N-acetyl-alpha-D-glucosamine-binding positions include lysine 21, glutamine 76, and 81 to 82 (GT). A Mg(2+)-binding site is contributed by aspartate 105. The UDP-N-acetyl-alpha-D-glucosamine site is built by glycine 140, glutamate 158, and asparagine 231. Asparagine 231 is a Mg(2+) binding site. The linker stretch occupies residues 234-254 (LQLADLERRLQRKQAEALLEA). The tract at residues 255-460 (GVRLADPARF…AGWQRPQKKR (206 aa)) is N-acetyltransferase. UDP-N-acetyl-alpha-D-glucosamine is bound by residues arginine 337 and lysine 355. The active-site Proton acceptor is histidine 367. Residues tyrosine 370 and asparagine 381 each coordinate UDP-N-acetyl-alpha-D-glucosamine. Residues alanine 384, 390-391 (NY), serine 409, glycine 427, and arginine 444 contribute to the acetyl-CoA site.

The protein in the N-terminal section; belongs to the N-acetylglucosamine-1-phosphate uridyltransferase family. It in the C-terminal section; belongs to the transferase hexapeptide repeat family. In terms of assembly, homotrimer. It depends on Mg(2+) as a cofactor.

It localises to the cytoplasm. It carries out the reaction alpha-D-glucosamine 1-phosphate + acetyl-CoA = N-acetyl-alpha-D-glucosamine 1-phosphate + CoA + H(+). The enzyme catalyses N-acetyl-alpha-D-glucosamine 1-phosphate + UTP + H(+) = UDP-N-acetyl-alpha-D-glucosamine + diphosphate. Its pathway is nucleotide-sugar biosynthesis; UDP-N-acetyl-alpha-D-glucosamine biosynthesis; N-acetyl-alpha-D-glucosamine 1-phosphate from alpha-D-glucosamine 6-phosphate (route II): step 2/2. It functions in the pathway nucleotide-sugar biosynthesis; UDP-N-acetyl-alpha-D-glucosamine biosynthesis; UDP-N-acetyl-alpha-D-glucosamine from N-acetyl-alpha-D-glucosamine 1-phosphate: step 1/1. The protein operates within bacterial outer membrane biogenesis; LPS lipid A biosynthesis. Functionally, catalyzes the last two sequential reactions in the de novo biosynthetic pathway for UDP-N-acetylglucosamine (UDP-GlcNAc). The C-terminal domain catalyzes the transfer of acetyl group from acetyl coenzyme A to glucosamine-1-phosphate (GlcN-1-P) to produce N-acetylglucosamine-1-phosphate (GlcNAc-1-P), which is converted into UDP-GlcNAc by the transfer of uridine 5-monophosphate (from uridine 5-triphosphate), a reaction catalyzed by the N-terminal domain. The polypeptide is Bifunctional protein GlmU (Methylibium petroleiphilum (strain ATCC BAA-1232 / LMG 22953 / PM1)).